A 938-amino-acid chain; its full sequence is LPS-assembly protein LptD (938 aa).

The signal sequence occupies residues 1 to 33 (MAVKHPAFRKKFPLLVTGSLLALQPAFSLQSFA). The disordered stretch occupies residues 52 to 96 (KTATSALPPRPQHSRSAVSTTSGSATATATKQEPAPVLVTESKGR). Over residues 65–81 (SRSAVSTTSGSATATAT) the composition is skewed to low complexity.

Belongs to the LptD family. As to quaternary structure, component of the lipopolysaccharide transport and assembly complex. Interacts with LptE and LptA.

The protein localises to the cell outer membrane. Its function is as follows. Together with LptE, is involved in the assembly of lipopolysaccharide (LPS) at the surface of the outer membrane. This Ectopseudomonas mendocina (strain ymp) (Pseudomonas mendocina) protein is LPS-assembly protein LptD.